Consider the following 509-residue polypeptide: UDP-N-acetylmuramyl-tripeptide synthetase (509 aa).

ATP is bound at residue 124 to 130 (GTNGKTS). UDP-N-acetyl-alpha-D-muramoyl-L-alanyl-D-glutamate contacts are provided by residues 164 to 165 (TT), serine 191, and arginine 199. Lysine 231 carries the N6-carboxylysine modification.

This sequence belongs to the MurCDEF family. MurE subfamily. Post-translationally, carboxylation is probably crucial for Mg(2+) binding and, consequently, for the gamma-phosphate positioning of ATP.

The protein localises to the cytoplasm. Its pathway is cell wall biogenesis; peptidoglycan biosynthesis. Its function is as follows. Catalyzes the addition of an amino acid to the nucleotide precursor UDP-N-acetylmuramoyl-L-alanyl-D-glutamate (UMAG) in the biosynthesis of bacterial cell-wall peptidoglycan. The polypeptide is UDP-N-acetylmuramyl-tripeptide synthetase (Tropheryma whipplei (strain Twist) (Whipple's bacillus)).